We begin with the raw amino-acid sequence, 359 residues long: Isopentenyl-diphosphate delta-isomerase (359 aa).

Residue 12-13 (RK) coordinates substrate. Residues Ser-68, 69–71 (AMT), Ser-99, and Asn-128 each bind FMN. 99–101 (SQR) contributes to the substrate binding site. Gln-162 contacts substrate. A Mg(2+)-binding site is contributed by Glu-163. Residues Lys-194, Thr-224, 277–279 (GIR), and 298–299 (AL) each bind FMN.

This sequence belongs to the IPP isomerase type 2 family. Homooctamer. Dimer of tetramers. FMN serves as cofactor. NADPH is required as a cofactor. Requires Mg(2+) as cofactor.

It is found in the cytoplasm. The enzyme catalyses isopentenyl diphosphate = dimethylallyl diphosphate. In terms of biological role, involved in the biosynthesis of isoprenoids. Catalyzes the 1,3-allylic rearrangement of the homoallylic substrate isopentenyl (IPP) to its allylic isomer, dimethylallyl diphosphate (DMAPP). This chain is Isopentenyl-diphosphate delta-isomerase, found in Methanoregula boonei (strain DSM 21154 / JCM 14090 / 6A8).